We begin with the raw amino-acid sequence, 393 residues long: 4-hydroxyphenylpyruvate dioxygenase (393 aa).

Thr-2 is modified (N-acetylthreonine). 2 VOC domains span residues 18-149 (HFHS…LVEK) and 180-338 (MIDH…IFTK). Lys-132 carries the post-translational modification N6-succinyllysine. His-183 serves as a coordination point for Fe cation. Phosphoserine occurs at positions 211, 226, and 250. Fe cation is bound by residues His-266 and Glu-349.

Belongs to the 4HPPD family. Homodimer. Requires Fe cation as cofactor.

The protein localises to the cytoplasm. Its subcellular location is the endoplasmic reticulum membrane. The protein resides in the golgi apparatus membrane. The enzyme catalyses 3-(4-hydroxyphenyl)pyruvate + O2 = homogentisate + CO2. Its pathway is amino-acid degradation; L-phenylalanine degradation; acetoacetate and fumarate from L-phenylalanine: step 3/6. Functionally, catalyzes the conversion of 4-hydroxyphenylpyruvic acid to homogentisic acid, one of the steps in tyrosine catabolism. The sequence is that of 4-hydroxyphenylpyruvate dioxygenase (HPD) from Homo sapiens (Human).